Consider the following 536-residue polypeptide: Phosphoenolpyruvate carboxykinase (ATP) (536 aa).

Substrate-binding residues include Arg62, Tyr203, and Lys209. ATP contacts are provided by residues Lys209, His228, and 244 to 252 (GLSGTGKTT). Positions 209 and 228 each coordinate Mn(2+). Asp265 serves as a coordination point for Mn(2+). Residues Glu293, Arg329, 445-446 (RI), and Thr451 contribute to the ATP site. Arg329 contacts substrate.

The protein belongs to the phosphoenolpyruvate carboxykinase (ATP) family. As to quaternary structure, monomer. The cofactor is Mn(2+).

It localises to the cytoplasm. The enzyme catalyses oxaloacetate + ATP = phosphoenolpyruvate + ADP + CO2. Its pathway is carbohydrate biosynthesis; gluconeogenesis. Involved in the gluconeogenesis. Catalyzes the conversion of oxaloacetate (OAA) to phosphoenolpyruvate (PEP) through direct phosphoryl transfer between the nucleoside triphosphate and OAA. The polypeptide is Phosphoenolpyruvate carboxykinase (ATP) (Actinobacillus pleuropneumoniae serotype 7 (strain AP76)).